We begin with the raw amino-acid sequence, 340 residues long: MEASLLMRSSCCSSAIGGFFDHRRELSTSTPISTLLPLPSTKSSFSVRCSLPQPSKPRSGTSSVHAVMTLAGSLTGKKRVDESESLTLEGIRNSLIRQEDSIIFGLLERAKYCYNADTYDPTAFDMDGFNGSLVEYMVKGTEKLHAKVGRFKSPDEHPFFPDDLPEPMLPPLQYPKVLHFAADSININKKIWNMYFRDLVPRLVKKGDDGNYGSTAVCDAICLQCLSKRIHYGKFVAEAKFQASPEAYESAIKAQDKDALMDMLTFPTVEDAIKKRVEMKTRTYGQEVKVGMEEKEEEEEEGNESHVYKISPILVGDLYGDWIMPLTKEVQVEYLLRRLD.

Residues 1 to 65 (MEASLLMRSS…KPRSGTSSVH (65 aa)) constitute a chloroplast transit peptide. A66 bears the N-acetylalanine mark. An L-phenylalanine-binding site is contributed by R79. The Chorismate mutase domain occupies 79-340 (RVDESESLTL…QVEYLLRRLD (262 aa)). L-tyrosine is bound by residues R150 and 211 to 214 (NYGS). 211 to 214 (NYGS) serves as a coordination point for L-phenylalanine.

In terms of assembly, homodimer. In terms of tissue distribution, expressed in roots, shoots, rosette leaves, stems, cauline leaves, flowers and siliques.

The protein resides in the plastid. Its subcellular location is the chloroplast. The catalysed reaction is chorismate = prephenate. Its pathway is metabolic intermediate biosynthesis; prephenate biosynthesis; prephenate from chorismate: step 1/1. With respect to regulation, allosterically inhibited by tyrosine and phenylalanine. Activated by tryptophan. Its function is as follows. May play a role in chloroplast biogenesis. This is Chorismate mutase 1, chloroplastic from Arabidopsis thaliana (Mouse-ear cress).